A 432-amino-acid polypeptide reads, in one-letter code: Adenylosuccinate synthetase (432 aa).

GTP is bound by residues 11 to 17 (GDEGKGK) and 39 to 41 (GHT). The active-site Proton acceptor is Asp-12. Mg(2+)-binding residues include Asp-12 and Gly-39. IMP is bound by residues 12 to 15 (DEGK), 37 to 40 (NAGH), Thr-134, Arg-148, Asn-230, Thr-245, and Arg-309. Catalysis depends on His-40, which acts as the Proton donor. 305 to 311 (VTTGRKR) is a substrate binding site. Residues Arg-311, 337–339 (KLD), and 419–421 (GTG) contribute to the GTP site.

The protein belongs to the adenylosuccinate synthetase family. As to quaternary structure, homodimer. It depends on Mg(2+) as a cofactor.

The protein localises to the cytoplasm. It catalyses the reaction IMP + L-aspartate + GTP = N(6)-(1,2-dicarboxyethyl)-AMP + GDP + phosphate + 2 H(+). The protein operates within purine metabolism; AMP biosynthesis via de novo pathway; AMP from IMP: step 1/2. Plays an important role in the de novo pathway and in the salvage pathway of purine nucleotide biosynthesis. Catalyzes the first committed step in the biosynthesis of AMP from IMP. This Kluyveromyces lactis (strain ATCC 8585 / CBS 2359 / DSM 70799 / NBRC 1267 / NRRL Y-1140 / WM37) (Yeast) protein is Adenylosuccinate synthetase.